The following is a 526-amino-acid chain: Probable fucosyltransferase 7 (526 aa).

Over 1 to 4 (MKTK) the chain is Cytoplasmic. A helical; Signal-anchor for type II membrane protein membrane pass occupies residues 5 to 25 (LMITIFSCLLLWSMLLLLSFS). Residues 26–526 (NIFKHQLLGA…KLVDDTKNEL (501 aa)) are Lumenal-facing. Asn211, Asn215, and Asn363 each carry an N-linked (GlcNAc...) asparagine glycan.

It belongs to the glycosyltransferase 37 family. As to expression, expressed in roots, leaves, stems and seedlings.

It is found in the golgi apparatus. The protein resides in the golgi stack membrane. Its pathway is protein modification; protein glycosylation. In terms of biological role, may be involved in cell wall biosynthesis. May act as a fucosyltransferase. This chain is Probable fucosyltransferase 7 (FUT7), found in Arabidopsis thaliana (Mouse-ear cress).